A 183-amino-acid polypeptide reads, in one-letter code: Beta-defensin 129 (183 aa).

Residues 1 to 19 (MKLLFPIFASLMLQYQVNT) form the signal peptide. 3 cysteine pairs are disulfide-bonded: C27/C53, C34/C48, and C38/C54. The tract at residues 141 to 183 (TATSTKSNTKESRDSATASPPPAPPPPNILPTPSLELEEAEEQ) is disordered. Positions 159-170 (SPPPAPPPPNIL) are enriched in pro residues.

Belongs to the beta-defensin family.

It is found in the secreted. Has antibacterial activity. The polypeptide is Beta-defensin 129 (DEFB129) (Pan troglodytes (Chimpanzee)).